Reading from the N-terminus, the 62-residue chain is Large ribosomal subunit protein bL33c (62 aa).

This sequence belongs to the bacterial ribosomal protein bL33 family.

The protein resides in the plastid. It localises to the chloroplast. The protein is Large ribosomal subunit protein bL33c of Cyanidioschyzon merolae (strain NIES-3377 / 10D) (Unicellular red alga).